We begin with the raw amino-acid sequence, 492 residues long: Ketol-acid reductoisomerase (NADP(+)) (492 aa).

The region spanning 15 to 208 is the KARI N-terminal Rossmann domain; the sequence is AQLGQCRFMD…GGDRAGVLQS (194 aa). NADP(+) contacts are provided by residues 45-48, Arg-68, Arg-76, Ser-78, and 108-110; these read CGAQ and DKQ. His-132 is an active-site residue. Position 158 (Gly-158) interacts with NADP(+). KARI C-terminal knotted domains are found at residues 209-353 and 354-486; these read SFIA…DEQT and YFDK…MTDM. Mg(2+) contacts are provided by Asp-217, Glu-221, Glu-389, and Glu-393. Ser-414 is a substrate binding site.

It belongs to the ketol-acid reductoisomerase family. Mg(2+) is required as a cofactor.

It catalyses the reaction (2R)-2,3-dihydroxy-3-methylbutanoate + NADP(+) = (2S)-2-acetolactate + NADPH + H(+). The catalysed reaction is (2R,3R)-2,3-dihydroxy-3-methylpentanoate + NADP(+) = (S)-2-ethyl-2-hydroxy-3-oxobutanoate + NADPH + H(+). Its pathway is amino-acid biosynthesis; L-isoleucine biosynthesis; L-isoleucine from 2-oxobutanoate: step 2/4. It participates in amino-acid biosynthesis; L-valine biosynthesis; L-valine from pyruvate: step 2/4. Involved in the biosynthesis of branched-chain amino acids (BCAA). Catalyzes an alkyl-migration followed by a ketol-acid reduction of (S)-2-acetolactate (S2AL) to yield (R)-2,3-dihydroxy-isovalerate. In the isomerase reaction, S2AL is rearranged via a Mg-dependent methyl migration to produce 3-hydroxy-3-methyl-2-ketobutyrate (HMKB). In the reductase reaction, this 2-ketoacid undergoes a metal-dependent reduction by NADPH to yield (R)-2,3-dihydroxy-isovalerate. This chain is Ketol-acid reductoisomerase (NADP(+)), found in Shewanella oneidensis (strain ATCC 700550 / JCM 31522 / CIP 106686 / LMG 19005 / NCIMB 14063 / MR-1).